A 226-amino-acid chain; its full sequence is Peroxiredoxin-like 2C (226 aa).

The interval 1-24 is disordered; that stretch reads MAAPVTRQVSGCAGRVPSPAGSVT.

This sequence belongs to the peroxiredoxin-like PRXL2 family. PRXL2C subfamily.

Functionally, may positively regulate ERK1/2 signaling and AKT1 activation leading to HIF1A up-regulation with an increased expression of glycolysis genes and enhanced glycolysis. The chain is Peroxiredoxin-like 2C (Prxl2c) from Mus musculus (Mouse).